Here is a 278-residue protein sequence, read N- to C-terminus: Large ribosomal subunit protein uL2 (278 aa).

The disordered stretch occupies residues 212-278 (NRHRGIRPQT…IISRKKHKKG (67 aa)). A compositionally biased stretch (basic residues) spans 257-278 (YKTRKKKASDKLIISRKKHKKG).

This sequence belongs to the universal ribosomal protein uL2 family. As to quaternary structure, part of the 50S ribosomal subunit. Forms a bridge to the 30S subunit in the 70S ribosome.

Its function is as follows. One of the primary rRNA binding proteins. Required for association of the 30S and 50S subunits to form the 70S ribosome, for tRNA binding and peptide bond formation. It has been suggested to have peptidyltransferase activity; this is somewhat controversial. Makes several contacts with the 16S rRNA in the 70S ribosome. The sequence is that of Large ribosomal subunit protein uL2 from Helicobacter pylori (strain Shi470).